The sequence spans 128 residues: NHP2-like protein 1 (128 aa).

N-acetylmethionine is present on Met-1. Thr-2 is modified (N-acetylthreonine; in NHP2-like protein 1, N-terminally processed). Lys-21 is subject to N6-acetyllysine. The segment at 36 to 48 (RKGANEATKTLNR) is interaction with U4 snRNA and U4atac snRNA. Residues 96-128 (SRPVIACSVTIKEGSQLKQQIQSIQQSIERLLV) are important for U4 snRNA-binding. Phosphoserine is present on Ser-122.

Belongs to the eukaryotic ribosomal protein eL8 family. Identified in the spliceosome B complex. Component of the U4/U6-U5 tri-snRNP complex composed of the U4, U6 and U5 snRNAs and at least PRPF3, PRPF4, PRPF6, PRPF8, PRPF31, SNRNP200, TXNL4A, WDR57, SNRNP40, DDX23, CD2BP2, PPIH, NHP2L1, EFTUD2, SART1 and USP39. Interacts with RAD17 and PRPF31. The complex formed by SNU13 and PRPF31 binds U4 snRNA. The complex formed by SNU13 and PRPF31 also binds U4atac snRNA, a characteristic component of specific, less abundant spliceosomal complexes. Part of the small subunit (SSU) processome, composed of more than 70 proteins and the RNA chaperone small nucleolar RNA (snoRNA) U3. Core component of box C/D small nucleolar ribonucleoprotein (snoRNP) particles; the core proteins SNU13, NOP56, NOP58 and FBL or FBLL1 assemble stepwise onto the snoRNA.

Its subcellular location is the nucleus. The protein resides in the nucleolus. Functionally, part of the small subunit (SSU) processome, first precursor of the small eukaryotic ribosomal subunit. During the assembly of the SSU processome in the nucleolus, many ribosome biogenesis factors, an RNA chaperone and ribosomal proteins associate with the nascent pre-rRNA and work in concert to generate RNA folding, modifications, rearrangements and cleavage as well as targeted degradation of pre-ribosomal RNA by the RNA exosome. Involved in pre-mRNA splicing as component of the spliceosome. Binds to the 5'-stem-loop of U4 snRNA and thereby contributes to spliceosome assembly. The protein undergoes a conformational change upon RNA-binding. Core component of box C/D small nucleolar ribonucleoprotein (snoRNP) complexes that function in methylation of multiple sites on ribosomal RNAs (rRNAs) and messenger RNAs (mRNAs). The sequence is that of NHP2-like protein 1 from Bos taurus (Bovine).